The following is a 322-amino-acid chain: Ribosomal RNA small subunit methyltransferase H (322 aa).

Residues 47 to 49, Asp-67, Phe-93, Asp-112, and Gln-119 each bind S-adenosyl-L-methionine; that span reads GGH.

This sequence belongs to the methyltransferase superfamily. RsmH family.

Its subcellular location is the cytoplasm. It carries out the reaction cytidine(1402) in 16S rRNA + S-adenosyl-L-methionine = N(4)-methylcytidine(1402) in 16S rRNA + S-adenosyl-L-homocysteine + H(+). In terms of biological role, specifically methylates the N4 position of cytidine in position 1402 (C1402) of 16S rRNA. The sequence is that of Ribosomal RNA small subunit methyltransferase H from Stenotrophomonas maltophilia (strain R551-3).